We begin with the raw amino-acid sequence, 159 residues long: 17 kDa surface antigen (159 aa).

Residues 1–19 (MKLLSKIMIIALATSMLQA) form the signal peptide. Residue cysteine 20 is the site of N-palmitoyl cysteine attachment. Residue cysteine 20 is the site of S-diacylglycerol cysteine attachment.

It belongs to the rickettsiale 17 kDa surface antigen family.

It localises to the cell outer membrane. This is 17 kDa surface antigen (omp) from Rickettsia conorii (strain ATCC VR-613 / Malish 7).